We begin with the raw amino-acid sequence, 157 residues long: Phosphopantetheine adenylyltransferase (157 aa).

Ser-8 serves as a coordination point for substrate. Residues 8-9 and His-16 contribute to the ATP site; that span reads SF. Lys-40, Thr-72, and Arg-86 together coordinate substrate. Residues 87–89, Glu-97, and 122–128 each bind ATP; these read GLR and HSFLSSS.

Belongs to the bacterial CoaD family. In terms of assembly, homohexamer. Mg(2+) serves as cofactor.

It localises to the cytoplasm. It catalyses the reaction (R)-4'-phosphopantetheine + ATP + H(+) = 3'-dephospho-CoA + diphosphate. It participates in cofactor biosynthesis; coenzyme A biosynthesis; CoA from (R)-pantothenate: step 4/5. Functionally, reversibly transfers an adenylyl group from ATP to 4'-phosphopantetheine, yielding dephospho-CoA (dPCoA) and pyrophosphate. The chain is Phosphopantetheine adenylyltransferase from Prochlorococcus marinus (strain MIT 9303).